Reading from the N-terminus, the 99-residue chain is Large ribosomal subunit protein uL23 (99 aa).

It belongs to the universal ribosomal protein uL23 family. In terms of assembly, part of the 50S ribosomal subunit. Contacts protein L29, and trigger factor when it is bound to the ribosome.

In terms of biological role, one of the early assembly proteins it binds 23S rRNA. One of the proteins that surrounds the polypeptide exit tunnel on the outside of the ribosome. Forms the main docking site for trigger factor binding to the ribosome. The protein is Large ribosomal subunit protein uL23 of Lachnoclostridium phytofermentans (strain ATCC 700394 / DSM 18823 / ISDg) (Clostridium phytofermentans).